A 261-amino-acid polypeptide reads, in one-letter code: Chitinase 8 (261 aa).

The N-terminal stretch at 1–29 is a signal peptide; the sequence is MTTTTTRFVQLAACAAASLLAVAASGAAA. Cystine bridges form between Cys-53/Cys-115 and Cys-221/Cys-253. Glu-98 (proton donor) is an active-site residue.

The protein belongs to the glycosyl hydrolase 19 family. Chitinase class II subfamily. Expressed in roots, leaves, sheaths and meristems.

The enzyme catalyses Random endo-hydrolysis of N-acetyl-beta-D-glucosaminide (1-&gt;4)-beta-linkages in chitin and chitodextrins.. This chain is Chitinase 8 (Cht8), found in Oryza sativa subsp. japonica (Rice).